We begin with the raw amino-acid sequence, 366 residues long: MLQIFIAGAVAFLVSVFLTPVLIRWFSAEGLGQEIREEGPKSHFKKRGTPTMGGIAVLAGIVFGYLIAVLVGLVTTGAGPGVSGWLVLGLTLALGGLGFADDYIKLVKGRNLGLNAKAKLVGQLVTAIVFGLLILQFPNAHGLTPGSTHLSFVRDIATFDIAIGPAIVGMILFLIFIYLVISAWSNAVNLTDGLDGLASGVTAIVMGTYVLITFWQFRNSCAVSAQAACYAVRDPLDLSMLASAGLGACLGFLWWNAAPAKIFMGDTGSLALGGLVAGLSVTTQTELLMILVGIIFVIEAASVVIQVVSFKATGKRVFRMAPIHHHFENKGWAETTVVIRFWLLAALAAMSGFAVFYAEWLNGASF.

Transmembrane regions (helical) follow at residues 3-23 (QIFIAGAVAFLVSVFLTPVLI), 54-74 (GIAVLAGIVFGYLIAVLVGLV), 80-100 (PGVSGWLVLGLTLALGGLGFA), 120-140 (LVGQLVTAIVFGLLILQFPNA), 161-181 (IAIGPAIVGMILFLIFIYLVI), 197-217 (LASGVTAIVMGTYVLITFWQF), 238-258 (LSMLASAGLGACLGFLWWNAA), 262-282 (IFMGDTGSLALGGLVAGLSVT), 288-308 (LMILVGIIFVIEAASVVIQVV), and 341-361 (FWLLAALAAMSGFAVFYAEWL).

The protein belongs to the glycosyltransferase 4 family. MraY subfamily. Mg(2+) is required as a cofactor.

It localises to the cell membrane. It carries out the reaction UDP-N-acetyl-alpha-D-muramoyl-L-alanyl-gamma-D-glutamyl-meso-2,6-diaminopimeloyl-D-alanyl-D-alanine + di-trans,octa-cis-undecaprenyl phosphate = di-trans,octa-cis-undecaprenyl diphospho-N-acetyl-alpha-D-muramoyl-L-alanyl-D-glutamyl-meso-2,6-diaminopimeloyl-D-alanyl-D-alanine + UMP. The protein operates within cell wall biogenesis; peptidoglycan biosynthesis. In terms of biological role, catalyzes the initial step of the lipid cycle reactions in the biosynthesis of the cell wall peptidoglycan: transfers peptidoglycan precursor phospho-MurNAc-pentapeptide from UDP-MurNAc-pentapeptide onto the lipid carrier undecaprenyl phosphate, yielding undecaprenyl-pyrophosphoryl-MurNAc-pentapeptide, known as lipid I. The chain is Phospho-N-acetylmuramoyl-pentapeptide-transferase from Corynebacterium jeikeium (strain K411).